We begin with the raw amino-acid sequence, 1063 residues long: Presequence protease, mitochondrial (1063 aa).

The transit peptide at 1–33 directs the protein to the mitochondrion; the sequence is MLRLANRVSRKDSGNLGIAQLKKRLLATSGVSQ. Residue H105 coordinates Zn(2+). The active-site Proton acceptor is the E108. H109 serves as a coordination point for Zn(2+). E181 is an active-site residue. E206 lines the Zn(2+) pocket.

It belongs to the peptidase M16 family. PreP subfamily. As to quaternary structure, monomer and homodimer; homodimerization is induced by binding of the substrate. Requires Zn(2+) as cofactor.

Its subcellular location is the mitochondrion intermembrane space. The protein resides in the mitochondrion matrix. Functionally, degrades mitochondrial transit peptides after their cleavage in the intermembrane space or in the matrix, and presequence peptides; clearance of these peptides is required to keep the presequence processing machinery running. Preferentially cleaves the N-terminal side of paired basic amino acid residues. Also degrades other unstructured peptides. May function as an ATP-dependent peptidase as opposed to a metalloendopeptidase. The polypeptide is Presequence protease, mitochondrial (CYM1) (Debaryomyces hansenii (strain ATCC 36239 / CBS 767 / BCRC 21394 / JCM 1990 / NBRC 0083 / IGC 2968) (Yeast)).